A 218-amino-acid polypeptide reads, in one-letter code: 2-C-methyl-D-erythritol 4-phosphate cytidylyltransferase (218 aa).

Belongs to the IspD/TarI cytidylyltransferase family. IspD subfamily.

The catalysed reaction is 2-C-methyl-D-erythritol 4-phosphate + CTP + H(+) = 4-CDP-2-C-methyl-D-erythritol + diphosphate. Its pathway is isoprenoid biosynthesis; isopentenyl diphosphate biosynthesis via DXP pathway; isopentenyl diphosphate from 1-deoxy-D-xylulose 5-phosphate: step 2/6. In terms of biological role, catalyzes the formation of 4-diphosphocytidyl-2-C-methyl-D-erythritol from CTP and 2-C-methyl-D-erythritol 4-phosphate (MEP). This Chlamydia muridarum (strain MoPn / Nigg) protein is 2-C-methyl-D-erythritol 4-phosphate cytidylyltransferase.